Reading from the N-terminus, the 131-residue chain is Large ribosomal subunit protein bL19 (131 aa).

Residues R111 to K124 are compositionally biased toward basic and acidic residues. The disordered stretch occupies residues R111–E131.

This sequence belongs to the bacterial ribosomal protein bL19 family.

Functionally, this protein is located at the 30S-50S ribosomal subunit interface and may play a role in the structure and function of the aminoacyl-tRNA binding site. The sequence is that of Large ribosomal subunit protein bL19 from Methylobacterium nodulans (strain LMG 21967 / CNCM I-2342 / ORS 2060).